The chain runs to 376 residues: Lipoyl synthase 2, mitochondrial (376 aa).

Positions 109, 114, 120, 140, 144, 147, and 356 each coordinate [4Fe-4S] cluster. Positions 125-345 (ETGTATATIM…QTLGMEMGFR (221 aa)) constitute a Radical SAM core domain.

The protein belongs to the radical SAM superfamily. Lipoyl synthase family. [4Fe-4S] cluster is required as a cofactor.

It localises to the mitochondrion. It carries out the reaction [[Fe-S] cluster scaffold protein carrying a second [4Fe-4S](2+) cluster] + N(6)-octanoyl-L-lysyl-[protein] + 2 oxidized [2Fe-2S]-[ferredoxin] + 2 S-adenosyl-L-methionine + 4 H(+) = [[Fe-S] cluster scaffold protein] + N(6)-[(R)-dihydrolipoyl]-L-lysyl-[protein] + 4 Fe(3+) + 2 hydrogen sulfide + 2 5'-deoxyadenosine + 2 L-methionine + 2 reduced [2Fe-2S]-[ferredoxin]. It participates in protein modification; protein lipoylation via endogenous pathway; protein N(6)-(lipoyl)lysine from octanoyl-[acyl-carrier-protein]: step 2/2. In terms of biological role, catalyzes the radical-mediated insertion of two sulfur atoms into the C-6 and C-8 positions of the octanoyl moiety bound to the lipoyl domains of lipoate-dependent enzymes, thereby converting the octanoylated domains into lipoylated derivatives. The protein is Lipoyl synthase 2, mitochondrial of Pisum sativum (Garden pea).